The sequence spans 590 residues: Regulatory solute carrier protein family 1 member 1 (590 aa).

Disordered stretches follow at residues 1-116 (MSSS…TQGL), 144-234 (EEGW…PDSE), 277-331 (SPSS…AEES), and 359-466 (EEVT…SHRT). Residues 16–35 (SSGQSPEAGNPTSLARSVSA) are compositionally biased toward polar residues. Residues 78–91 (SPCAAAAAPSSAMP) show a composition bias toward low complexity. Over residues 150 to 161 (ENQNPSQVNDLQ) the composition is skewed to polar residues. Basic and acidic residues-rich tracts occupy residues 162–179 (QHQEPENARHEAGPRDAP) and 188–203 (PGERQQKHEVADREAT). Residues 313-331 (SSSSVCGSSQPPAESAEES) are compositionally biased toward low complexity. The span at 362–376 (TCQSEGTAWGQTRVN) shows a compositional bias: polar residues. Composition is skewed to basic and acidic residues over residues 380–395 (RWTESERRTQDEDRPQ) and 404–420 (VKTEKLTDASPDTRIED). Polar residues predominate over residues 451 to 465 (SVTVTSAETSNQSHR). Residues 544 to 584 (GFPAADIDRILRAGFTLQEALGALHRVGGNADLALLVLLAK) form the UBA domain.

In terms of assembly, interacts with YRDC. Highly expressed in renal outer medulla, renal inner medulla, duodenum, ileum and jejunum. Moderately expressed in renal outer cortex, renal papilla, brain and liver.

The protein resides in the cell membrane. It is found in the nucleus. The protein localises to the golgi apparatus. It localises to the trans-Golgi network. Mediates transcriptional and post-transcriptional regulation of SLC5A1. Inhibits a dynamin and PKC-dependent exocytotic pathway of SLC5A1. Also involved in transcriptional regulation of SLC22A2. Exhibits glucose-dependent, short-term inhibition of SLC5A1 and SLC22A2 by inhibiting the release of vesicles from the trans-Golgi network. This Oryctolagus cuniculus (Rabbit) protein is Regulatory solute carrier protein family 1 member 1 (RSC1A1).